A 601-amino-acid chain; its full sequence is DNA ligase (601 aa).

Asp258 provides a ligand contact to ATP. The active-site N6-AMP-lysine intermediate is the Lys260. ATP-binding residues include Arg265, Arg280, Glu310, Phe350, Arg427, and Lys433. The interval 568–601 (DKSPEDATTTDEILEMYNKQPKKKIESPPIDESV) is disordered.

Belongs to the ATP-dependent DNA ligase family. Mg(2+) is required as a cofactor.

It carries out the reaction ATP + (deoxyribonucleotide)n-3'-hydroxyl + 5'-phospho-(deoxyribonucleotide)m = (deoxyribonucleotide)n+m + AMP + diphosphate.. Its function is as follows. DNA ligase that seals nicks in double-stranded DNA during DNA replication, DNA recombination and DNA repair. The sequence is that of DNA ligase from Saccharolobus islandicus (strain Y.N.15.51 / Yellowstone #2) (Sulfolobus islandicus).